The sequence spans 400 residues: Phosphoglycerate kinase (400 aa).

Substrate-binding positions include 23–25 (DLN), arginine 38, 61–64 (HFGR), arginine 120, and arginine 153. ATP is bound by residues lysine 203, glutamate 325, and 355–358 (GGDT).

Belongs to the phosphoglycerate kinase family. In terms of assembly, monomer.

The protein localises to the cytoplasm. The catalysed reaction is (2R)-3-phosphoglycerate + ATP = (2R)-3-phospho-glyceroyl phosphate + ADP. It participates in carbohydrate degradation; glycolysis; pyruvate from D-glyceraldehyde 3-phosphate: step 2/5. The chain is Phosphoglycerate kinase from Agrobacterium fabrum (strain C58 / ATCC 33970) (Agrobacterium tumefaciens (strain C58)).